A 1530-amino-acid chain; its full sequence is MSAPLGPRGRPAPTPAASQPPPQPEMPDLSHLTEEERKIILAVMDRQKKEEEKEQSVLKIKEEHKAQPTQWFPFSGITELVNNVLQPQQKQPNEKEPQTKLHQQFEMYKEQVKKMGEESQQQQEQKGDAPTCGICHKTKFADGCGHNCSYCQTKFCARCGGRVSLRSNKVMWVCNLCRKQQEILTKSGAWFYNSGSNTLQQPDQKVPRGLRNEEAPQEKKAKLHEQPQFQGAPGDLSVPAVEKGRAHGLTRQDTIKNGSGVKHQIASDMPSDRKRSPSVSRDQNRRYEQSEEREDYSQYVPSDGTMPRSPSDYADRRSQREPQFYEEPGHLNYRDSNRRGHRHSKEYIVDDEDVESRDEYERQRREEEYQARYRSDPNLARYPVKPQPYEEQMRIHAEVSRARHERRHSDVSLANAELEDSRISLLRMDRPSRQRSVSERRAAMENQRSYSMERTREAQGQSSYPQRTSNHSPPTPRRSPIPLDRPDMRRADSLRKQHHLDPSSAVRKTKREKMETMLRNDSLSSDQSESVRPPPPRPHKSKKGGKMRQVSLSSSEEELASTPEYTSCDDVELESESVSEKGDSQKGKRKTSEQGVLSDSNTRSERQKKRMYYGGHSLEEDLEWSEPQIKDSGVDTCSSTTLNEEHSHSDKHPVTWQPSKDGDRLIGRILLNKRLKDGSVPRDSGAMLGLKVVGGKMTESGRLCAFITKVKKGSLADTVGHLRPGDEVLEWNGRLLQGATFEEVYNIILESKPEPQVELVVSRPIGDIPRIPDSTHAQLESSSSSFESQKMDRPSISVTSPMSPGMLRDVPQFLSGQLSIKLWFDKVGHQLIVTILGAKDLPSREDGRPRNPYVKIYFLPDRSDKNKRRTKTVKKTLEPKWNQTFIYSPVHRREFRERMLEITLWDQARVREEESEFLGEILIELETALLDDEPHWYKLQTHDVSSLPLPRPSPYLPRRQLHGESPTRRLQRSKRISDSEVSDYDCEDGVGVVSDYRHNGRDLQSSTLSVPEQVMSSNHCSPSGSPHRVDVIGRTRSWSPSAPPPQRNVEQGHRGTRATGHYNTISRMDRHRVMDDHYSSDRDRSHPRTGSVQTSPSSTPGTGRRGRQLPQLPPKGTLERSAMDIEERNRQMKLNKYKQVAGSDPRLEQDYHSKYRSGWDPHRGADTVSTKSSDSDVSDVSAVSRTSSASRFSSTSYMSVQSERPRGNRKISVFTSKMQNRQMGVSGKNLTKSTSISGDMCSLEKNDGSQSDTAVGALGTSGKKRRSSIGAKMVAIVGLSRKSRSASQLSQTEGGGKKLRSTVQRSTETGLAVEMRNWMTRQASRESTDGSMNSYSSEGNLIFPGVRLASDSQFSDFLDGLGPAQLVGRQTLATPAMGDIQVGMMDKKGQLEVEIIRARGLVVKPGSKTLPAPYVKVYLLDNGVCIAKKKTKVARKTLEPLYQQLLSFEESPQGRVLQIIVWGDYGRMDHKSFMGVAQILLDELELSNMVIGWFKLFPPSSLVDPTLAPLTRRASQSSLESSTGPSYSRS.

The disordered stretch occupies residues Met1–Glu34. Pro residues predominate over residues Arg10–Glu25. Positions Met26–Ser194 constitute a RabBD domain. The FYVE-type zinc-finger motif lies at Lys126–Glu182. Positions 132, 135, 148, 151, 156, 159, 174, and 177 each coordinate Zn(2+). 2 disordered regions span residues Gly195–Lys608 and Ser632–Thr655. 5 stretches are compositionally biased toward basic and acidic residues: residues Leu210 to Glu225, Glu327 to Arg338, Arg357 to Ser375, Glu391 to Asp410, and Glu419 to Ala443. Ser409 is subject to Phosphoserine. Residues Ala458–Ser472 are compositionally biased toward polar residues. A compositionally biased stretch (basic and acidic residues) spans Asp484 to Asp501. Polar residues predominate over residues Arg519–Ser530. Over residues Arg537 to Lys546 the composition is skewed to basic residues. Acidic residues predominate over residues Ser567–Ser577. Composition is skewed to basic and acidic residues over residues Val578 to Ser592 and Asn643 to Pro653. The PDZ domain occupies Asp677–Arg763. At Thr698 the chain carries Phosphothreonine. Residues Ile771 to Met802 form a disordered region. A phosphoserine mark is found at Ser800 and Ser803. The 124-residue stretch at Leu814–Tyr937 folds into the C2 1 domain. Disordered stretches follow at residues Pro948–Ser982, Leu1003–Ala1122, Arg1130–Gln1149, Lys1154–Ser1187, Ser1242–Lys1263, and Lys1282–Thr1307. The span at Leu1003–Gly1024 shows a compositional bias: polar residues. Residues Arg1067–His1086 are compositionally biased toward basic and acidic residues. Polar residues predominate over residues Arg1088–Gly1101. The residue at position 1095 (Ser1095) is a Phosphoserine. Over residues Lys1154 to Ala1165 the composition is skewed to basic and acidic residues. The residue at position 1175 (Ser1175) is a Phosphoserine. Over residues Ser1178–Ser1187 the composition is skewed to low complexity. Ser1251 is modified (phosphoserine). In terms of domain architecture, C2 2 spans Ala1376–Phe1494. Phosphoserine occurs at positions 1515 and 1518.

As to quaternary structure, interacts with TSPOAP1 and RIMBP2. Interacts with PPFIA3 and PPFIA4. Interacts via its zinc finger with the first C2 domain of UNC13A. Forms a complex consisting of UNC13A, RIMS2 and RAB3A. Heterodimer with PCLO. Part of a ternary complex involving PCLO and EPAC2. Interacts with RAB3A and RAB3B that have been activated by GTP-binding. Interacts with RAB3C, RAB3D and RAB26. As to expression, detected in testis, pituitary and an insulinoma cell line. Detected at low levels in cerebellar cortex.

It is found in the synapse. Its subcellular location is the synaptosome. Functionally, rab effector involved in exocytosis. May act as scaffold protein. Plays a role in dendrite formation by melanocytes. This chain is Regulating synaptic membrane exocytosis protein 2 (Rims2), found in Mus musculus (Mouse).